A 155-amino-acid chain; its full sequence is Prespore-specific protein E (155 aa).

A signal peptide spans 1–20 (MRFISIFLIIVALCVSSSWA). Asn22, Asn82, Asn85, and Asn102 each carry an N-linked (GlcNAc...) asparagine glycan. A glycan (O-linked (GlcNAc) serine) is linked at Ser105. Asn133 is lipidated: GPI-like-anchor amidated asparagine. A propeptide spans 134–155 (SADKVAVGIAIIFGALISLLAL) (removed in mature form).

In terms of processing, the GPI-like-anchor contains a phosphoceramide group, rather than a phosphatidyl group.

The protein resides in the cell membrane. The polypeptide is Prespore-specific protein E (pspE) (Dictyostelium discoideum (Social amoeba)).